The sequence spans 121 residues: Two-component response regulator ORR12 (121 aa).

The region spanning 5–121 (HVLVVDDTLV…VDLPRILNYI (117 aa)) is the Response regulatory domain. Asp-55 bears the 4-aspartylphosphate mark.

It belongs to the ARR family. Type-A subfamily. Post-translationally, two-component system major event consists of a His-to-Asp phosphorelay between a sensor histidine kinase (HK) and a response regulator (RR). In plants, the His-to-Asp phosphorelay involves an additional intermediate named Histidine-containing phosphotransfer protein (HPt). This multistep phosphorelay consists of a His-Asp-His-Asp sequential transfer of a phosphate group between first a His and an Asp of the HK protein, followed by the transfer to a conserved His of the HPt protein and finally the transfer to an Asp in the receiver domain of the RR protein. In terms of tissue distribution, expressed in flowers and panicles.

Functions as a response regulator involved in His-to-Asp phosphorelay signal transduction system. Phosphorylation of the Asp residue in the receiver domain activates the ability of the protein to promote the transcription of target genes. Type-A response regulators seem to act as negative regulators of the cytokinin signaling. This is Two-component response regulator ORR12 from Oryza sativa subsp. japonica (Rice).